Reading from the N-terminus, the 541-residue chain is Chaperonin GroEL (541 aa).

ATP-binding positions include 29–32, 86–90, Gly-413, 476–478, and Asp-492; these read TLGP, DGTTT, and NAA. The segment at 521–541 is disordered; it reads KPEDNPAPAAPAANPGMGGMM. A compositionally biased stretch (low complexity) spans 526–535; it reads PAPAAPAANP.

The protein belongs to the chaperonin (HSP60) family. As to quaternary structure, forms a cylinder of 14 subunits composed of two heptameric rings stacked back-to-back. Interacts with the co-chaperonin GroES.

The protein localises to the cytoplasm. The catalysed reaction is ATP + H2O + a folded polypeptide = ADP + phosphate + an unfolded polypeptide.. Its function is as follows. Together with its co-chaperonin GroES, plays an essential role in assisting protein folding. The GroEL-GroES system forms a nano-cage that allows encapsulation of the non-native substrate proteins and provides a physical environment optimized to promote and accelerate protein folding. This Levilactobacillus brevis (strain ATCC 367 / BCRC 12310 / CIP 105137 / JCM 1170 / LMG 11437 / NCIMB 947 / NCTC 947) (Lactobacillus brevis) protein is Chaperonin GroEL.